A 91-amino-acid chain; its full sequence is Small ribosomal subunit protein uS19 (91 aa).

The protein belongs to the universal ribosomal protein uS19 family.

In terms of biological role, protein S19 forms a complex with S13 that binds strongly to the 16S ribosomal RNA. In Prochlorococcus marinus (strain MIT 9211), this protein is Small ribosomal subunit protein uS19.